Consider the following 301-residue polypeptide: Hydroxymycolate synthase MmaA4 (301 aa).

Residues 42-43, 81-83, 103-108, 132-133, and Ile145 each bind S-adenosyl-L-methionine; these read YS, GCG, TLSKNQ, and WE. Cys278 is an active-site residue.

Belongs to the CFA/CMAS family. As to quaternary structure, monomer.

It participates in lipid metabolism; mycolic acid biosynthesis. Functionally, involved in the biosynthesis of hydroxymycolate, a common precursor of oxygenated mycolic acids (methoxymycolate and ketomycolate). Probably transfers a methyl group from the S-adenosylmethionine (SAM) cofactor and, subsequently or simultaneously, a water molecule onto the double bound of ethylene substrates, leading to the formation of the hydroxylated product at the distal position. The protein is Hydroxymycolate synthase MmaA4 (cmaA) of Mycobacterium bovis (strain ATCC BAA-935 / AF2122/97).